The sequence spans 206 residues: CASP-like protein 1F1 (206 aa).

The Cytoplasmic portion of the chain corresponds to 1–43 (MCFQFSILYTCYLAHFGVFPRKYLVMAGIEAKFQQNPPLGTHK). A helical transmembrane segment spans residues 44–64 (LFLGAHICLRILTVTATLTAA). Over 65–92 (WMMITSKQTVEVYGIQVEAKYSYSSAFK) the chain is Extracellular. A helical transmembrane segment spans residues 93–113 (FFSYANAIACGCSVLTLFPAF). Residues 114 to 124 (SLFYRGSTPMK) are Cytoplasmic-facing. The helical transmembrane segment at 125–145 (FFFLFLHDLCMMSLVLAGCAA) threads the bilayer. Over 146 to 177 (ATAIGYVGRYGNNHAGWMAICDQFDEYCNRIR) the chain is Extracellular. The helical transmembrane segment at 178–198 (LSLMFSYLAFVFILMLTIMSA) threads the bilayer. Over 199–206 (NKSREIRV) the chain is Cytoplasmic.

Belongs to the Casparian strip membrane proteins (CASP) family. Homodimer and heterodimers.

It localises to the cell membrane. The protein is CASP-like protein 1F1 of Vitis vinifera (Grape).